The chain runs to 483 residues: Zinc metalloproteinase/disintegrin (483 aa).

An N-terminal signal peptide occupies residues 1–20 (MIQVLLVTLCLAAFPYQGSS). A propeptide spanning residues 21-190 (IILESGNVND…KKASQLNLTP (170 aa)) is cleaved from the precursor. The Peptidase M12B domain maps to 198 to 394 (RYIELVVVAD…HNPQCMLNEP (197 aa)). Glu-201 and Asp-285 together coordinate Ca(2+). Cystine bridges form between Cys-309–Cys-389, Cys-349–Cys-373, and Cys-351–Cys-356. Position 334 (His-334) interacts with Zn(2+). The active site involves Glu-335. Residues His-338 and His-344 each coordinate Zn(2+). Ca(2+) is bound by residues Cys-389 and Asn-392. Positions 395-418 (LRTDIVSTPVSGNELLETGEESDF) are excised as a propeptide. Residues 402 to 483 (TPVSGNELLE…AGCPRNPFHA (82 aa)) form the Disintegrin domain. Disulfide bonds link Cys-425-Cys-448, Cys-439-Cys-445, Cys-444-Cys-469, and Cys-457-Cys-476. Positions 461-463 (RGD) match the Cell attachment site motif.

It belongs to the venom metalloproteinase (M12B) family. P-II subfamily. P-IId sub-subfamily. In terms of assembly, homodimer; disulfide-linked (disintegrin). It depends on Zn(2+) as a cofactor. As to expression, expressed by the venom gland.

It is found in the secreted. Its function is as follows. Impairs hemostasis in the envenomed animal. This protein has not been identified in the venom. Functionally, inhibits ADP-induced platelet aggregation. Binds and inhibits integrins GPIIb/GPIIIa (ITGA2B/ITGB3), alpha-5/beta-1 (ITGA5/ITGB1), alpha-V/beta-3 (ITGAV/ITGB3), and alpha-V/beta-5 (ITGAV/ITGB5). It blocks cancer cell adhesion (tested on human breast cancer cell line MDA-MB-435) to fibronectin and vitronectin and thus prevents invasion of cancer cells. The chain is Zinc metalloproteinase/disintegrin from Agkistrodon contortrix contortrix (Southern copperhead).